The following is a 378-amino-acid chain: Chaperone protein DnaJ (378 aa).

The 66-residue stretch at 5-70 (DYYEVLGLQK…EKRAMYDQYG (66 aa)) folds into the J domain. The CR-type zinc finger occupies 135 to 213 (GVKKDIRIRT…CHGDGRVEKT (79 aa)). C148, C151, C165, C168, C187, C190, C201, and C204 together coordinate Zn(2+). CXXCXGXG motif repeat units lie at residues 148-155 (CDTCHGSG), 165-172 (CPHCHGSG), 187-194 (CPSCHGTG), and 201-208 (CKSCHGDG).

This sequence belongs to the DnaJ family. In terms of assembly, homodimer. The cofactor is Zn(2+).

Its subcellular location is the cytoplasm. Participates actively in the response to hyperosmotic and heat shock by preventing the aggregation of stress-denatured proteins and by disaggregating proteins, also in an autonomous, DnaK-independent fashion. Unfolded proteins bind initially to DnaJ; upon interaction with the DnaJ-bound protein, DnaK hydrolyzes its bound ATP, resulting in the formation of a stable complex. GrpE releases ADP from DnaK; ATP binding to DnaK triggers the release of the substrate protein, thus completing the reaction cycle. Several rounds of ATP-dependent interactions between DnaJ, DnaK and GrpE are required for fully efficient folding. Also involved, together with DnaK and GrpE, in the DNA replication of plasmids through activation of initiation proteins. The chain is Chaperone protein DnaJ from Glaesserella parasuis serovar 5 (strain SH0165) (Haemophilus parasuis).